Here is a 493-residue protein sequence, read N- to C-terminus: Cobyric acid synthase (493 aa).

Residues 246-440 (PIDIAVIKMP…IHGVFDGVSF (195 aa)) form the GATase cobBQ-type domain. Cys326 acts as the Nucleophile in catalysis. His432 is an active-site residue.

Belongs to the CobB/CobQ family. CobQ subfamily.

Its pathway is cofactor biosynthesis; adenosylcobalamin biosynthesis. Its function is as follows. Catalyzes amidations at positions B, D, E, and G on adenosylcobyrinic A,C-diamide. NH(2) groups are provided by glutamine, and one molecule of ATP is hydrogenolyzed for each amidation. The sequence is that of Cobyric acid synthase from Clostridium botulinum (strain Langeland / NCTC 10281 / Type F).